The primary structure comprises 184 residues: Elongation factor P (184 aa).

It belongs to the elongation factor P family.

The protein localises to the cytoplasm. It functions in the pathway protein biosynthesis; polypeptide chain elongation. In terms of biological role, involved in peptide bond synthesis. Stimulates efficient translation and peptide-bond synthesis on native or reconstituted 70S ribosomes in vitro. Probably functions indirectly by altering the affinity of the ribosome for aminoacyl-tRNA, thus increasing their reactivity as acceptors for peptidyl transferase. The sequence is that of Elongation factor P from Thermus thermophilus (strain ATCC BAA-163 / DSM 7039 / HB27).